We begin with the raw amino-acid sequence, 454 residues long: Bifunctional protein GlmU (454 aa).

The tract at residues 1–227 is pyrophosphorylase; it reads MKKLSVVILA…KMEVEGANNR (227 aa). Residues 9-12, lysine 23, glutamine 74, 79-80, 101-103, glycine 138, glutamate 152, asparagine 167, and asparagine 225 each bind UDP-N-acetyl-alpha-D-glucosamine; these read LAAG, GT, and YGD. Residue aspartate 103 coordinates Mg(2+). Position 225 (asparagine 225) interacts with Mg(2+). The segment at 228 to 248 is linker; the sequence is LQLAALERYYQHKQAERLLLE. An N-acetyltransferase region spans residues 249–454; sequence GVMLIDPARF…AGWQRPTKKK (206 aa). UDP-N-acetyl-alpha-D-glucosamine is bound by residues arginine 331 and lysine 349. The active-site Proton acceptor is the histidine 361. Positions 364 and 375 each coordinate UDP-N-acetyl-alpha-D-glucosamine. Acetyl-CoA-binding positions include alanine 378, 384 to 385, serine 403, alanine 421, and arginine 438; that span reads NY.

In the N-terminal section; belongs to the N-acetylglucosamine-1-phosphate uridyltransferase family. It in the C-terminal section; belongs to the transferase hexapeptide repeat family. In terms of assembly, homotrimer. The cofactor is Mg(2+).

The protein resides in the cytoplasm. It catalyses the reaction alpha-D-glucosamine 1-phosphate + acetyl-CoA = N-acetyl-alpha-D-glucosamine 1-phosphate + CoA + H(+). The catalysed reaction is N-acetyl-alpha-D-glucosamine 1-phosphate + UTP + H(+) = UDP-N-acetyl-alpha-D-glucosamine + diphosphate. It functions in the pathway nucleotide-sugar biosynthesis; UDP-N-acetyl-alpha-D-glucosamine biosynthesis; N-acetyl-alpha-D-glucosamine 1-phosphate from alpha-D-glucosamine 6-phosphate (route II): step 2/2. The protein operates within nucleotide-sugar biosynthesis; UDP-N-acetyl-alpha-D-glucosamine biosynthesis; UDP-N-acetyl-alpha-D-glucosamine from N-acetyl-alpha-D-glucosamine 1-phosphate: step 1/1. It participates in bacterial outer membrane biogenesis; LPS lipid A biosynthesis. In terms of biological role, catalyzes the last two sequential reactions in the de novo biosynthetic pathway for UDP-N-acetylglucosamine (UDP-GlcNAc). The C-terminal domain catalyzes the transfer of acetyl group from acetyl coenzyme A to glucosamine-1-phosphate (GlcN-1-P) to produce N-acetylglucosamine-1-phosphate (GlcNAc-1-P), which is converted into UDP-GlcNAc by the transfer of uridine 5-monophosphate (from uridine 5-triphosphate), a reaction catalyzed by the N-terminal domain. In Mannheimia succiniciproducens (strain KCTC 0769BP / MBEL55E), this protein is Bifunctional protein GlmU.